A 146-amino-acid chain; its full sequence is Basic phospholipase A2 paradoxin-like alpha chain (146 aa).

A signal peptide spans 1–27 (MHPAHLLVLLAVCVSLLGASDIPPLPL). 7 disulfides stabilise this stretch: cysteine 38-cysteine 99, cysteine 54-cysteine 145, cysteine 56-cysteine 72, cysteine 71-cysteine 126, cysteine 78-cysteine 119, cysteine 88-cysteine 112, and cysteine 106-cysteine 117. Positions 55, 57, and 59 each coordinate Ca(2+). Histidine 75 is an active-site residue. Aspartate 76 is a Ca(2+) binding site. Aspartate 120 is an active-site residue.

It belongs to the phospholipase A2 family. Group I subfamily. D49 sub-subfamily. In terms of assembly, heterotrimer of alpha, beta, and gamma chains; non-covalently linked. Ca(2+) is required as a cofactor. In terms of tissue distribution, expressed by the venom gland.

Its subcellular location is the secreted. The catalysed reaction is a 1,2-diacyl-sn-glycero-3-phosphocholine + H2O = a 1-acyl-sn-glycero-3-phosphocholine + a fatty acid + H(+). In terms of biological role, heterotrimer: Snake venom phospholipase A2 (PLA2) heterotrimer that acts as a potent presynaptic neurotoxin by blocking synaptic transmission and synaptic vesicle recycling. May act by binding in a calcium-dependent fashion to neurotonal pentraxin-1 (NPTX1) and neurotonal pentraxin-2 (NPTX2), but not to neuronal pentraxin receptor (NPTXR). Also binds to taipoxin-associated calcium binding protein 49 (RCN2), a protein localized in the lumen of endoplasmic reticulum. Its function is as follows. Monomer (alpha chain): Snake venom phospholipase A2 (PLA2) alpha chain that possesses the same high enzymatic activity than the heterotrimer. PLA2 catalyzes the calcium-dependent hydrolysis of the 2-acyl groups in 3-sn-phosphoglycerides. The sequence is that of Basic phospholipase A2 paradoxin-like alpha chain from Oxyuranus microlepidotus (Inland taipan).